Here is a 105-residue protein sequence, read N- to C-terminus: uncharacterized protein (105 aa).

This sequence belongs to the asfivirus C122R family.

It is found in the virion. This is an uncharacterized protein from African swine fever virus (strain Badajoz 1971 Vero-adapted) (Ba71V).